The chain runs to 547 residues: MLRQWWLRSVGSCSTVYRAHSGCSTSAAVKPKRAIPTDGLQLSDFIKESTKKQRQKAIIPSIEDTKEYLNPEDLQGNGRTVCYVTYGCQMNVSDMEIVRSIMTKYGFVESDKKENADIVLLMTCSIRDGAEKKVWNQLKLIRSNSVNKGQIVGVLGCMAERVRHDLLEKRNLVNIVAGPDSYRDLPRLVAVAAGGSNGINVQLSLDETYADVQPIRVDSASKTAFISIMRGCDNMCTYCVVPFTRGRERSRPIESIVEEVQRLRDQGYKQVTLLGQNVNSYRDMTSMDFSMAPSTSQEDRVPGFKTVYKPKSGGLTFTTLLEKVADAAPDIRFRFTSPHPKDFPMQLIELIASRPNLCKQLHLPAQSGDDETLERMERGYTRDLYLRLVDDIRHVLPSVSLTSDFIAGFCGETEQAHQNTLSLIRAVRYSFCFVFPYSMRGKTRAHHRLTDDVPEDVKARRHLDLTTVFREEALKLNQALIGSEQTVLLEGKSKRDASFSHGRIDGGVKAVFDNSKLCLEPGQYAKILITDANSQTLKAQLIGQSSI.

An MTTase N-terminal domain is found at 79-194 (RTVCYVTYGC…LPRLVAVAAG (116 aa)). 6 residues coordinate [4Fe-4S] cluster: Cys-88, Cys-124, Cys-157, Cys-232, Cys-236, and Cys-239. The Radical SAM core domain occupies 218–475 (DSASKTAFIS…TTVFREEALK (258 aa)). Residues 478–543 (QALIGSEQTV…SQTLKAQLIG (66 aa)) enclose the TRAM domain.

This sequence belongs to the methylthiotransferase family. MiaB subfamily. [4Fe-4S] cluster serves as cofactor.

Its function is as follows. Potential regulator of CDK5 activity. The chain is CDK5RAP1-like protein from Caenorhabditis elegans.